A 464-amino-acid chain; its full sequence is Multifunctional dye peroxidase DyP2 (464 aa).

Asp-203 acts as the Proton acceptor in catalysis. Residues Glu-258, Glu-273, and Glu-284 each contribute to the Mn(2+) site. A heme-binding site is contributed by His-321.

Belongs to the DyP-type peroxidase family. In terms of assembly, exists both as a monomeric and oligomeric species in solution; the monomeric form contains no bound heme cofactor and is inactive. It depends on heme b as a cofactor. Requires Mn(2+) as cofactor.

The protein localises to the secreted. It catalyses the reaction 1-(4-hydroxy-3-methoxyphenyl)-2-(2-methoxyphenoxy)propane-1,3-diol + H2O2 = guaiacol + vanillin + glycolaldehyde + H2O. It carries out the reaction 2 Mn(2+) + H2O2 + 2 H(+) = 2 Mn(3+) + 2 H2O. The enzyme catalyses 2 a phenolic donor + H2O2 = 2 a phenolic radical donor + 2 H2O. The catalysed reaction is Reactive Blue 5 + 2 H2O2 = 2,2'-disulfonyl azobenzene + 3-[(4-amino-6-chloro-1,3,5-triazin-2-yl)amino]benzenesulfonate + phthalate + 2 H2O + 2 H(+). In terms of biological role, displays both high peroxidase and manganese peroxidase activity. Is likely involved in lignin degradation. Also has a Mn-dependent oxidase mode of action that expands its substrate scope in vitro; is thus able to catalyze the O(2)- and Mn-dependent oxidative decarboxylation of 4-methoxymandelate to anisaldehyde. This is Multifunctional dye peroxidase DyP2 from Amycolatopsis sp. (strain ATCC 39116 / 75iv2).